Consider the following 504-residue polypeptide: Chromosomal replication initiator protein DnaA (504 aa).

Residues 1 to 109 (MTADPDPPFV…PTDEPEDAPD (109 aa)) are domain I, interacts with DnaA modulators. A disordered region spans residues 98 to 162 (ATPTDEPEDA…PDTSSDDSNA (65 aa)). Over residues 109–125 (DSFADSPAPASVPAGPA) the composition is skewed to low complexity. Residues 110 to 163 (SFADSPAPASVPAGPADADEIDDDRDARVNAQESWPKYFSRPEPDTSSDDSNAV) are domain II. Residues 164–380 (NLNRRYTFDT…GALIRVTAFA (217 aa)) form a domain III, AAA+ region region. Residues glycine 208, glycine 210, lysine 211, and threonine 212 each coordinate ATP. Residues 381–504 (SLNKTRIDRS…TTRIRQRAKR (124 aa)) are domain IV, binds dsDNA.

This sequence belongs to the DnaA family. Oligomerizes as a right-handed, spiral filament on DNA at oriC.

The protein resides in the cytoplasm. Plays an essential role in the initiation and regulation of chromosomal replication. ATP-DnaA binds to the origin of replication (oriC) to initiate formation of the DNA replication initiation complex once per cell cycle. Binds the DnaA box (a 9 base pair repeat at the origin) and separates the double-stranded (ds)DNA. Forms a right-handed helical filament on oriC DNA; dsDNA binds to the exterior of the filament while single-stranded (ss)DNA is stabiized in the filament's interior. The ATP-DnaA-oriC complex binds and stabilizes one strand of the AT-rich DNA unwinding element (DUE), permitting loading of DNA polymerase. After initiation quickly degrades to an ADP-DnaA complex that is not apt for DNA replication. Binds acidic phospholipids. In terms of biological role, the probable consensus sequence for the DnaA box of this bacterium is 5'-TT(G/C)TCCACA-3'. This is Chromosomal replication initiator protein DnaA from Mycolicibacterium smegmatis (strain ATCC 700084 / mc(2)155) (Mycobacterium smegmatis).